The sequence spans 2313 residues: MLTSKNNDIGNLIEIFRQRDITYKERKATLQKIEELIPKVPDLEALNTKWIYLLDNAVWPLIVKSDRMDLKSLAGKVTRHVGALLFDSPFYPEFLLWLGTLLQNTPKKNDDARADIVFSVYYIVGAISQKSENRLGKNDEEYVRKSLEWLIRVIPNSSSAVYNNCLKGIILISNTFRKVTDDLYESCLRAIVSNFPDFNSHEKNFERLLDTVNLFSDHFSKDPVLAEEMVRIIRPDIKKNGLRNTRELKKRLKLTMAIVKMAKSQQILVETNEMMCELQAELEGNGGKWSSAALITIICDLLNELLILGKNDAEMRQSVEESLGNLLKDLNLSKQNTKEKQAFFNSLAKIVKQLPAESDVKTRIHHIVFNSDTGLFNIQNDDNRIFGHNTIYRDLVNLISVLLTPTSLSHLQATYTDLRKIMMESMSKLKQSERWHESILLLFFSALQGISCAKSSLIVMIGIRPSIFELFCDELPLTEYWLASNHPEVYHIFITILVGHLKAHDFYVSQSDYLVHGETPTGHAYGQTKREYVRKQVIALHKIIGGFGNRLWKKTRFLISTWLHSLVVIARDQKISAESFRLKEWVRLRNTVIQHSVLDWNNESINQALTVLSTVTNWSALPLELNKDITDKTKKATWKEATTIWESGDFKTYIRQSLSTTYQMSQERQQKQIGSTSFGAEEFNLVTNFLLKQIVPTTFKKGPYVWMDEVLETAIQGCKNISQEKSDVPETFMEKWDWIINQTANFCIVNKMKTPLGKPMQTFAAFENEIKRLAKEVINRKSSDKKPKSTTEDVPPPATPPLKFSIQWLRVHLLLKLIEVLEKIMISSIRGGSSIFNLTEIPVTARQFFIMNSSSCEVWLNRVYYPALIVAYFNGYYGLVIRFGSNALNHYARQKGSDEKMITNGVCTACLMSLSMAVLGEPMEIVGLRRRVREEFGTEMGQKLMEALGEMASARYEIALVQLEAILVVDSSINETLRIIIQIAITDMLNRIRLPDAVRYYKKTLFGEDEEAQVAEDFRSIEMLTKFEKLNYGVAEKRQVVDWSARERLQLVESAYSQTMKRNELLELQKEMSAMGALALSADSSCKLYSDISSTSLVIANLVDRMTGTSHWKNQLTDVEMFDRAEEGNEGDKLTICRKLMHWGRHMKHHRGQSFAAHGEIIRFSRKTSNCELAFFHINSAIRGEKLEAWQRLEVERQRLKLVKSQHFDVRVREMNEVFGSLADVFSTSIEMKQKFQNLDDQTKDLMVANGYLSDIAKREEHMSRASIQLADFFDTLPTIDTVLTPNLYNTIIWSEIQSRSNSLSCGYAGLVGALYNLSADLCPSLAKAHLKMAKWTYEMAKIENFPNISPFALYQFGQTAQENEELWRSLDATSLVNLEKQVRKIVPDAMRASVLLSPNNPYLLLWEAASAHRRKFLCITVSSYFQFIHNMSGDFECLPYSKREETTLATLRILEMLVKHGEVLVDVINDGLSRTNVHVWKEILPQLFARLSHPSDHIRKTLVDLISRVCTAAPHAVVFQVVSGAASSTEVSDLEEQQNDDRNRVRACCEQLETKMAQSYPNLVRDVRQFVAELERINLLNEEKWSVVLGTMEHEMEKRLALIKAENAKTDFSMHLMPKQKDEIISKKTKLLTRQIFDVLDELYEKTIVAQPETENEKEFFNTFSEMLTKAHTESKNNRYNSPEASWAPFKNLVSNFAHRTNKKGMQTFQTADISQYLATLGKSCVPMPGQESVEFDRVVSIARVADNVTILPTKTRPKKLGFIGSDGKQLAFLFKGREDLHLDERVMQFLRLCNVMLQSEKGKSRQIAEYQAHHYAVIPLGPRSGLIKWVEGATPIFHIYRKWQMKEKALKQATKKNGETVPEIEKPTNMYHNMIRQAFTAHNIDAIIASDRSKWPAQILEEVFDGLCSKTPTDLISREIWMRANDSTAWWAVTKRYARSLAVMSMVGSVLGLGDRHLDNLLVDLKYGHVVHIDYNICFDKGKILRIPETVPFRLSRNMRHALGPSDMYGTFRESCVHVLSTLRSGHQVLTMLLDAFVFDPLVDWTSHDNISTSGGVSLALQLAVYGSSWKAKARERLTDTIELFQLRVTELQALWMSNREDLYHWMKQVTDCLLAEQSIMGMNGAYAQQRVKAGTELREAVARHQALAKEFRPLIRVIGKEKEEFADYLKFYKQAFIDPLLKGHSALRHELDIDTCVQNFNIVMQNIDVVFMSLISLSTMPIDSVSSRASQKQFNAPPGLENVWVLQQEQQENSQAREVVRRVERRLNGWLDGSAPDRKLSPREEADVLIAEATSSANLAQMYEGWTAWV.

The segment covering 779 to 791 (NRKSSDKKPKSTT) has biased composition (basic and acidic residues). The interval 779 to 798 (NRKSSDKKPKSTTEDVPPPA) is disordered. The FAT domain maps to 1045–1528 (ARERLQLVES…VFQVVSGAAS (484 aa)). Residues 1478–1514 (VHVWKEILPQLFARLSHPSDHIRKTLVDLISRVCTAA) form an HEAT repeat. In terms of domain architecture, PI3K/PI4K catalytic spans 1746–2091 (VADNVTILPT…DTIELFQLRV (346 aa)). The segment at 1752–1758 (ILPTKTR) is G-loop. Residues 1954 to 1962 (GLGDRHLDN) are catalytic loop. Residues 1974–1998 (HIDYNICFDKGKILRIPETVPFRLS) form an activation loop region. Residues 2281–2313 (RKLSPREEADVLIAEATSSANLAQMYEGWTAWV) enclose the FATC domain.

This sequence belongs to the PI3/PI4-kinase family. As to quaternary structure, component of a post-splicing multiprotein NMD complex. Requires Mn(2+) as cofactor.

It is found in the cytoplasm. It carries out the reaction L-seryl-[protein] + ATP = O-phospho-L-seryl-[protein] + ADP + H(+). The catalysed reaction is L-threonyl-[protein] + ATP = O-phospho-L-threonyl-[protein] + ADP + H(+). Functionally, serine/threonine protein kinase involved in mRNA surveillance. Recognizes the substrate consensus sequence [ST]-Q. Involved in nonsense-mediated decay (NMD) of mRNAs containing premature stop codons by phosphorylating smg-2. The sequence is that of Serine/threonine-protein kinase smg-1 (smg-1) from Caenorhabditis briggsae.